Reading from the N-terminus, the 602-residue chain is NAD-dependent protein deacetylase sir-2.1 (602 aa).

The disordered stretch occupies residues 25-57 (PEIETMHIENSVEGESGRQRTESTASVNSESWQ). Positions 46–57 (ESTASVNSESWQ) are enriched in polar residues. One can recognise a Deacetylase sirtuin-type domain in the interval 119–374 (KLFTYNSLSD…RDICYALGGS (256 aa)). Residues 144-163 (GAGVSVSCGIPDFRSKDGIY) and 228-231 (QNID) contribute to the NAD(+) site. The Proton acceptor role is filled by H246. 4 residues coordinate Zn(2+): C254, C257, C278, and C281. NAD(+)-binding positions include 318–320 (GSS), 343–345 (NRE), and C360. 2 disordered regions span residues 411-468 (QERR…SDEV) and 520-551 (RNRHESDSSCESCSTVPGSDKSEANPLSRSQS).

The protein belongs to the sirtuin family. Class I subfamily. As to quaternary structure, interacts with ftt-2 and par-5. Interacts with daf-16 following heat-shock, which causes daf-16 to accumulate in the nucleus. Interaction with daf-16 is promoted by ftt-2. It depends on Zn(2+) as a cofactor.

The protein localises to the nucleus. The enzyme catalyses N(6)-acetyl-L-lysyl-[protein] + NAD(+) + H2O = 2''-O-acetyl-ADP-D-ribose + nicotinamide + L-lysyl-[protein]. NAD-dependent deacetylase. Required for a reduction of the 'Lys-16' acetylation of histone H4 (H4K16ac) on dosage-compensated X chromosomes in hermaphrodites. Functions upstream of daf-16 in the insulin-like signaling pathway, promoting daf-16 mediated transcriptional activation and increased life-span. May also regulate life-span independently of daf-16 by modulating the transcription of genes involved in the stress response of the endoplasmic reticulum (ER). Acts upstream of the nicotinic acid metabolism pathway, which may be linked to the regulation of longevity. Plays a role in ascaroside-mediated longevity and stress resistance. The protein is NAD-dependent protein deacetylase sir-2.1 (sir-2.1) of Caenorhabditis briggsae.